The sequence spans 191 residues: Sporulation-specific protein (191 aa).

Its function is as follows. Not essential for sporulation. This Saccharomyces cerevisiae (strain ATCC 204508 / S288c) (Baker's yeast) protein is Sporulation-specific protein (SPR6).